A 68-amino-acid polypeptide reads, in one-letter code: Small ribosomal subunit protein bS21 (68 aa).

It belongs to the bacterial ribosomal protein bS21 family.

This Dinoroseobacter shibae (strain DSM 16493 / NCIMB 14021 / DFL 12) protein is Small ribosomal subunit protein bS21.